We begin with the raw amino-acid sequence, 204 residues long: N-(5'-phosphoribosyl)anthranilate isomerase (204 aa).

Belongs to the TrpF family.

The catalysed reaction is N-(5-phospho-beta-D-ribosyl)anthranilate = 1-(2-carboxyphenylamino)-1-deoxy-D-ribulose 5-phosphate. Its pathway is amino-acid biosynthesis; L-tryptophan biosynthesis; L-tryptophan from chorismate: step 3/5. This chain is N-(5'-phosphoribosyl)anthranilate isomerase, found in Bacillus cereus (strain Q1).